Reading from the N-terminus, the 123-residue chain is uncharacterized protein (123 aa).

The span at 31–57 shows a compositional bias: basic and acidic residues; the sequence is KLRTEAKKSKDKERTKEKEKHESLAKE. A disordered region spans residues 31 to 58; that stretch reads KLRTEAKKSKDKERTKEKEKHESLAKEK. The helical transmembrane segment at 91–111 threads the bilayer; that stretch reads IIIFLLILLVSGLMVGIFFGI.

The protein localises to the membrane. This is an uncharacterized protein from Mycoplasma genitalium (strain ATCC 33530 / DSM 19775 / NCTC 10195 / G37) (Mycoplasmoides genitalium).